The primary structure comprises 407 residues: Arginine biosynthesis bifunctional protein ArgJ (407 aa).

The substrate site is built by Thr-154, Lys-180, Thr-191, Glu-278, Asn-402, and Ser-407. Thr-191 (nucleophile) is an active-site residue.

Belongs to the ArgJ family. Heterotetramer of two alpha and two beta chains.

The protein localises to the cytoplasm. The enzyme catalyses N(2)-acetyl-L-ornithine + L-glutamate = N-acetyl-L-glutamate + L-ornithine. It carries out the reaction L-glutamate + acetyl-CoA = N-acetyl-L-glutamate + CoA + H(+). It functions in the pathway amino-acid biosynthesis; L-arginine biosynthesis; L-ornithine and N-acetyl-L-glutamate from L-glutamate and N(2)-acetyl-L-ornithine (cyclic): step 1/1. Its pathway is amino-acid biosynthesis; L-arginine biosynthesis; N(2)-acetyl-L-ornithine from L-glutamate: step 1/4. Catalyzes two activities which are involved in the cyclic version of arginine biosynthesis: the synthesis of N-acetylglutamate from glutamate and acetyl-CoA as the acetyl donor, and of ornithine by transacetylation between N(2)-acetylornithine and glutamate. The protein is Arginine biosynthesis bifunctional protein ArgJ of Psychrobacter arcticus (strain DSM 17307 / VKM B-2377 / 273-4).